The following is a 162-amino-acid chain: Putative ethylene-responsive transcription factor ERF121 (162 aa).

Disordered stretches follow at residues 1–21, 84–103, and 139–162; these read MDYS…PPNL, IKQE…KWSA, and KRSA…GGDD. Basic residues predominate over residues 87-98; the sequence is EKKHKGVRKKPS. Residues 89–146 constitute a DNA-binding region (AP2/ERF); sequence KHKGVRKKPSGKWSAEIWDPSTRTRRWLGTFPTAEMAADAYDEAAAALVEKRSARRGS.

Belongs to the AP2/ERF transcription factor family. ERF subfamily.

Its subcellular location is the nucleus. Its function is as follows. Probably acts as a transcriptional activator. Binds to the GCC-box pathogenesis-related promoter element. May be involved in the regulation of gene expression by stress factors and by components of stress signal transduction pathways. This Arabidopsis thaliana (Mouse-ear cress) protein is Putative ethylene-responsive transcription factor ERF121 (ERF121).